The primary structure comprises 135 residues: Large ribosomal subunit protein uL16c (135 aa).

The protein belongs to the universal ribosomal protein uL16 family. In terms of assembly, part of the 50S ribosomal subunit.

It localises to the plastid. Its subcellular location is the chloroplast. The sequence is that of Large ribosomal subunit protein uL16c from Piper cenocladum (Ant piper).